The following is a 344-amino-acid chain: L-rhamnose-proton symporter (344 aa).

The next 10 membrane-spanning stretches (helical) occupy residues 4-24 (AITM…CFYA), 38-58 (WSVG…ALLL), 68-88 (FSLS…IGNI), 101-121 (MGIG…TPII), 137-157 (TLLG…AGQL), 175-195 (LVLA…MNAA), 214-234 (LPSY…FCFI), 259-279 (VLLS…YAWG), 290-310 (ISWM…GLVL), and 323-343 (VLSL…IGMA).

The protein belongs to the L-rhamnose transporter (TC 2.A.7.6) family.

It localises to the cell inner membrane. The catalysed reaction is L-rhamnopyranose(in) + H(+)(in) = L-rhamnopyranose(out) + H(+)(out). Functionally, uptake of L-rhamnose across the cytoplasmic membrane with the concomitant transport of protons into the cell (symport system). The protein is L-rhamnose-proton symporter of Escherichia coli O127:H6 (strain E2348/69 / EPEC).